Consider the following 400-residue polypeptide: Ribosomal RNA dihydrouridine synthase (400 aa).

Residues A14, D33, N34, R40, G46, N51, V131, E367, and F380 each contribute to the FAD site.

Belongs to the BaiN/RdsA family. RdsA subfamily. It depends on FAD as a cofactor.

It catalyses the reaction a 5,6-dihydrouridine in mRNA + NAD(+) = a uridine in mRNA + NADH + H(+). Its function is as follows. Catalyzes the synthesis of 5,6-dihydrouridine (D) at position 2449 in 23S rRNA. Can use NADH as a source of reducing equivalents but not NADPH. In Escherichia coli (strain K12), this protein is Ribosomal RNA dihydrouridine synthase.